The following is a 539-amino-acid chain: Netrin-G1 (539 aa).

Residues 1 to 28 form the signal peptide; it reads MYLSRFLSIHALWVTVSSVMQPYPLVWG. 3 disulfides stabilise this stretch: cysteine 33–cysteine 50, cysteine 72–cysteine 92, and cysteine 80–cysteine 88. Positions 46-296 constitute a Laminin N-terminal domain; that stretch reads DYMACQPEST…AISDIKVRGR (251 aa). The segment at 80–91 is NGL discriminant loop I; sequence CAMGNPYMCNNE. A glycan (N-linked (GlcNAc...) asparagine) is linked at asparagine 133. Residues cysteine 182 and cysteine 206 are joined by a disulfide bond. Residues 208–214 are NGL discriminant loop II; it reads EEYSTGY. Residues 273-275 form an NGL discriminant loop III region; it reads EIF. 15 disulfide bridges follow: cysteine 297–cysteine 306, cysteine 299–cysteine 315, cysteine 317–cysteine 326, cysteine 329–cysteine 354, cysteine 364–cysteine 373, cysteine 366–cysteine 384, cysteine 387–cysteine 396, cysteine 399–cysteine 417, cysteine 420–cysteine 432, cysteine 422–cysteine 438, cysteine 440–cysteine 449, cysteine 452–cysteine 462, cysteine 467–cysteine 480, cysteine 474–cysteine 486, and cysteine 488–cysteine 497. Laminin EGF-like domains follow at residues 297–356, 364–419, and 420–469; these read CKCN…TCIP, CECF…VCIE, and CYCN…VCDN. Asparagine 320 carries an N-linked (GlcNAc...) asparagine glycan. N-linked (GlcNAc...) asparagine glycosylation is present at asparagine 406. Asparagine 433 carries an N-linked (GlcNAc...) asparagine glycan. Serine 510 carries GPI-anchor amidated serine lipidation. Residues 511-539 constitute a propeptide, removed in mature form; it reads DSGQGAPPHGSPALLLLTTLLGTASPLVF.

In terms of assembly, interacts with NGL1. N-glycosylated. As to expression, highly expressed in the thalamus, with very low expression, if any, in other tissues.

The protein localises to the cell membrane. Its function is as follows. Involved in controlling patterning and neuronal circuit formation at the laminar, cellular, subcellular and synaptic levels. Promotes neurite outgrowth of both axons and dendrites. The protein is Netrin-G1 (NTNG1) of Homo sapiens (Human).